Here is a 243-residue protein sequence, read N- to C-terminus: Protein YagJ (243 aa).

The polypeptide is Protein YagJ (yagJ) (Escherichia coli (strain K12)).